The sequence spans 364 residues: Ribosomal RNA large subunit methyltransferase M (364 aa).

S-adenosyl-L-methionine-binding positions include serine 198, alanine 231–glycine 234, aspartate 250, aspartate 270, and aspartate 286. Lysine 315 functions as the Proton acceptor in the catalytic mechanism.

This sequence belongs to the class I-like SAM-binding methyltransferase superfamily. RNA methyltransferase RlmE family. RlmM subfamily. In terms of assembly, monomer.

The protein localises to the cytoplasm. The enzyme catalyses cytidine(2498) in 23S rRNA + S-adenosyl-L-methionine = 2'-O-methylcytidine(2498) in 23S rRNA + S-adenosyl-L-homocysteine + H(+). Catalyzes the 2'-O-methylation at nucleotide C2498 in 23S rRNA. This is Ribosomal RNA large subunit methyltransferase M from Azoarcus sp. (strain BH72).